Here is a 229-residue protein sequence, read N- to C-terminus: Ribonuclease 3 (229 aa).

The RNase III domain maps to 4–133; the sequence is WEELQESVGF…FIGALYLDNG (130 aa). Mg(2+) is bound at residue E46. The active site involves D50. Positions 119 and 122 each coordinate Mg(2+). Residue E122 is part of the active site. One can recognise a DRBM domain in the interval 159 to 228; sequence DYKTQLQEIV…AQFAINQLTH (70 aa).

The protein belongs to the ribonuclease III family. As to quaternary structure, homodimer. It depends on Mg(2+) as a cofactor.

The protein resides in the cytoplasm. The catalysed reaction is Endonucleolytic cleavage to 5'-phosphomonoester.. In terms of biological role, digests double-stranded RNA. Involved in the processing of primary rRNA transcript to yield the immediate precursors to the large and small rRNAs (23S and 16S). Processes some mRNAs, and tRNAs when they are encoded in the rRNA operon. Processes pre-crRNA and tracrRNA of type II CRISPR loci if present in the organism. The chain is Ribonuclease 3 from Listeria welshimeri serovar 6b (strain ATCC 35897 / DSM 20650 / CCUG 15529 / CIP 8149 / NCTC 11857 / SLCC 5334 / V8).